The primary structure comprises 355 residues: DNA polymerase IV (355 aa).

Positions 4–185 (IIHIDMDCYF…LSLGKIPGVG (182 aa)) constitute a UmuC domain. Residues aspartate 8 and aspartate 103 each contribute to the Mg(2+) site. Glutamate 104 is an active-site residue.

The protein belongs to the DNA polymerase type-Y family. As to quaternary structure, monomer. It depends on Mg(2+) as a cofactor.

The protein localises to the cytoplasm. The enzyme catalyses DNA(n) + a 2'-deoxyribonucleoside 5'-triphosphate = DNA(n+1) + diphosphate. Its function is as follows. Poorly processive, error-prone DNA polymerase involved in untargeted mutagenesis. Copies undamaged DNA at stalled replication forks, which arise in vivo from mismatched or misaligned primer ends. These misaligned primers can be extended by PolIV. Exhibits no 3'-5' exonuclease (proofreading) activity. May be involved in translesional synthesis, in conjunction with the beta clamp from PolIII. The protein is DNA polymerase IV of Shewanella amazonensis (strain ATCC BAA-1098 / SB2B).